We begin with the raw amino-acid sequence, 512 residues long: uncharacterized protein (512 aa).

2 helical membrane-spanning segments follow: residues 20-40 (IFPVFMVMIIGLISFYAIYIW) and 222-242 (GIALLVVMGVVLILLVIFGYI). In terms of domain architecture, Histidine kinase spans 297 to 512 (EQLIQSIEQT…TLMCYQIPLV (216 aa)). Residue His-325 is modified to Phosphohistidine; by autocatalysis.

Autophosphorylated.

The protein resides in the cell membrane. It carries out the reaction ATP + protein L-histidine = ADP + protein N-phospho-L-histidine.. In terms of biological role, probable member of the two-component regulatory system SE_0166/SE_0165. May activate SE_0165 by phosphorylation. This is an uncharacterized protein from Staphylococcus epidermidis (strain ATCC 12228 / FDA PCI 1200).